The primary structure comprises 296 residues: Phosphatidylcholine:diacylglycerol cholinephosphotransferase 2 (296 aa).

5 helical membrane-spanning segments follow: residues 83–103, 136–156, 165–182, 198–218, and 250–270; these read HWIPCLFAAGVMFFTVVEYTF, VLAALNTILVGMQTTYIGCTW, TIAALFMFTCRGILGYST, PVGNVSFFLFYSGHVAGSMIA, and GHYTIDIAVGVGAGILFDSLA. Catalysis depends on residues H211, H251, and D255.

It belongs to the phosphatidylcholine:diacylglycerol cholinephosphotransferase family.

The protein resides in the membrane. Functions as a phosphatidylcholine:diacylglycerol cholinephosphotransferase that catalyzes the transfer of the phosphocholine headgroup from phosphatidylcholine (PC) to diacylglycerol, a major reaction for the transfer of 18:1 into phosphatidylcholine for desaturation and also for the reverse transfer of 18:2 and 18:3 into the triacylglycerols synthesis pathway. The chain is Phosphatidylcholine:diacylglycerol cholinephosphotransferase 2 from Arabidopsis thaliana (Mouse-ear cress).